We begin with the raw amino-acid sequence, 503 residues long: Pre-glycoprotein polyprotein GP complex (503 aa).

Gly2 carries N-myristoyl glycine; by host lipidation. Residues 2–17 (GQIVTLIQSIPEVLQE) are Extracellular-facing. The chain crosses the membrane as a helical span at residues 18 to 33 (VFNVALIIVSVLCIVK). The Cytoplasmic portion of the chain corresponds to 34–58 (GFVNLMRCGLFQLVTFLILSGRSCD). Cys57 contributes to the Zn(2+) binding site. Over 59–446 (SMMIDRRHNL…QGKTPLALTD (388 aa)) the chain is Extracellular. Disulfide bonds link Cys86/Cys248, Cys293/Cys306, Cys315/Cys324, and Cys378/Cys399. Asn89, Asn111, Asn181, and Asn241 each carry an N-linked (GlcNAc...) asparagine; by host glycan. Residues Asn379, Asn387, Asn404, and Asn409 are each glycosylated (N-linked (GlcNAc...) asparagine; by host). Residues 447–467 (ICFWSLVFYTITVFLHIVGIP) form a helical membrane-spanning segment. Topologically, residues 468-503 (THRHIIGDGCPKPHRITRNSLCSCGYYKYQRNLTNG) are cytoplasmic. The Zn(2+) site is built by His469, His471, Cys477, His481, Cys489, and Cys491.

It belongs to the arenaviridae GPC protein family. As to quaternary structure, interacts with glycoprotein G2. Part of the GP complex (GP-C) together with glycoprotein G1 and glycoprotein G2. The GP-complex interacts with protein Z, which interacts with ribonucleocapsid; these interactions may induce virion budding. In terms of assembly, homotrimer; disulfide-linked. In pre-fusion state, G1 homotrimers bind G2 homotrimers via ionic interactions. Part of the GP complex (GP-C) together with glycoprotein G2 and the stable signal peptide. The GP-complex interacts with protein Z, which interacts with ribonucleocapsid; these interactions may induce virion budding. Homotrimer. Interacts with the stable signal peptide. In pre-fusion state, G2 homotrimers bind G1 homotrimers via ionic interactions. Part of the GP complex (GP-C) together with glycoprotein G1 and the stable signal peptide. Acidification in the endosome triggers rearrangements, which ultimately leads to a 6 helix bundle formed by the two heptad repeat domains (HR1 and HR2) in post-fusion state. The GP-complex interacts with protein Z, which interacts with ribonucleocapsid; these interactions may induce virion budding. Specific enzymatic cleavages in vivo yield mature proteins. GP-C polyprotein is cleaved in the endoplasmic reticulum by the host protease MBTPS1. Only cleaved glycoprotein is incorporated into virions. Post-translationally, the SSP remains stably associated with the GP complex following cleavage by signal peptidase and plays crucial roles in the trafficking of GP through the secretory pathway. In terms of processing, myristoylation is necessary for GP2-mediated fusion activity.

Its subcellular location is the virion membrane. The protein resides in the host endoplasmic reticulum membrane. The protein localises to the host Golgi apparatus membrane. It localises to the host cell membrane. Its function is as follows. Functions as a cleaved signal peptide that is retained as the third component of the GP complex (GP-C). Helps to stabilize the spike complex in its native conformation. The SSP is required for efficient glycoprotein expression, post-translational maturation cleavage of G1 and G2, glycoprotein transport to the cell surface plasma membrane, formation of infectious virus particles, and acid pH-dependent glycoprotein-mediated cell fusion. In terms of biological role, forms the virion spikes together with glycoprotein G2. The glycoprotein spike trimers are connected to the underlying matrix. Interacts with the host receptor leading to virus endocytosis. Forms the virion spikes together with glycoprotein G1. The glycoprotein spike trimers are connected to the underlying matrix. Class I viral fusion protein that directs fusion of viral and host endosomal membranes, leading to delivery of the nucleocapsid into the cytoplasm. Membrane fusion is mediated by irreversible conformational changes induced by acidification. This chain is Pre-glycoprotein polyprotein GP complex, found in Cavia cutleri (Guinea pig).